Here is a 268-residue protein sequence, read N- to C-terminus: Undecaprenyl-diphosphatase (268 aa).

The next 8 helical transmembrane spans lie at 4–24 (STTL…FIPV), 50–70 (IQLG…ISVI), 84–104 (AAVL…HGFI), 109–129 (FETP…LLFV), 144–164 (VPLG…VPGV), 184–204 (AAEF…AFDL), 214–234 (GALG…VLVV), and 245–265 (GYSL…AALL).

Belongs to the UppP family.

It is found in the cell inner membrane. It carries out the reaction di-trans,octa-cis-undecaprenyl diphosphate + H2O = di-trans,octa-cis-undecaprenyl phosphate + phosphate + H(+). Catalyzes the dephosphorylation of undecaprenyl diphosphate (UPP). Confers resistance to bacitracin. This Cereibacter sphaeroides (strain ATCC 17025 / ATH 2.4.3) (Rhodobacter sphaeroides) protein is Undecaprenyl-diphosphatase.